A 469-amino-acid polypeptide reads, in one-letter code: uncharacterized protein (469 aa).

The HTH gntR-type domain occupies T13–V81. Positions K41 to E60 form a DNA-binding region, H-T-H motif. K309 carries the N6-(pyridoxal phosphate)lysine modification.

In the C-terminal section; belongs to the class-I pyridoxal-phosphate-dependent aminotransferase family. The cofactor is pyridoxal 5'-phosphate.

This is an uncharacterized protein from Bacillus subtilis (strain 168).